We begin with the raw amino-acid sequence, 418 residues long: Putative competence-damage inducible protein (418 aa).

The protein belongs to the CinA family.

This is Putative competence-damage inducible protein from Streptococcus pneumoniae serotype 19F (strain G54).